The chain runs to 152 residues: Large ribosomal subunit protein uL13 (152 aa).

Belongs to the universal ribosomal protein uL13 family. In terms of assembly, part of the 50S ribosomal subunit.

Its function is as follows. This protein is one of the early assembly proteins of the 50S ribosomal subunit, although it is not seen to bind rRNA by itself. It is important during the early stages of 50S assembly. This chain is Large ribosomal subunit protein uL13, found in Wolbachia pipientis wMel.